Here is a 386-residue protein sequence, read N- to C-terminus: Succinate--CoA ligase [ADP-forming] subunit beta (386 aa).

The region spanning 9 to 244 is the ATP-grasp domain; it reads KDLLTSYAIP…PSQENVRDVL (236 aa). ATP is bound by residues K46, 53–55, V102, and E107; that span reads GRG. Mg(2+) is bound by residues N199 and D213. Residues N264 and 321–323 contribute to the substrate site; that span reads GIM.

It belongs to the succinate/malate CoA ligase beta subunit family. In terms of assembly, heterotetramer of two alpha and two beta subunits. It depends on Mg(2+) as a cofactor.

The enzyme catalyses succinate + ATP + CoA = succinyl-CoA + ADP + phosphate. It carries out the reaction GTP + succinate + CoA = succinyl-CoA + GDP + phosphate. The protein operates within carbohydrate metabolism; tricarboxylic acid cycle; succinate from succinyl-CoA (ligase route): step 1/1. Its function is as follows. Succinyl-CoA synthetase functions in the citric acid cycle (TCA), coupling the hydrolysis of succinyl-CoA to the synthesis of either ATP or GTP and thus represents the only step of substrate-level phosphorylation in the TCA. The beta subunit provides nucleotide specificity of the enzyme and binds the substrate succinate, while the binding sites for coenzyme A and phosphate are found in the alpha subunit. This Chlamydia abortus (strain DSM 27085 / S26/3) (Chlamydophila abortus) protein is Succinate--CoA ligase [ADP-forming] subunit beta.